We begin with the raw amino-acid sequence, 382 residues long: S-adenosylmethionine synthase (382 aa).

ATP is bound at residue histidine 16. Aspartate 18 serves as a coordination point for Mg(2+). Glutamate 44 contacts K(+). 2 residues coordinate L-methionine: glutamate 57 and glutamine 100. Positions 100–110 (QSPDIAQGVDN) are flexible loop. Residues 165–167 (DAK), 231–232 (RF), aspartate 240, 246–247 (RK), and lysine 267 contribute to the ATP site. Residue aspartate 240 participates in L-methionine binding. Lysine 271 serves as a coordination point for L-methionine.

It belongs to the AdoMet synthase family. As to quaternary structure, homotetramer; dimer of dimers. It depends on Mg(2+) as a cofactor. Requires K(+) as cofactor.

It is found in the cytoplasm. The catalysed reaction is L-methionine + ATP + H2O = S-adenosyl-L-methionine + phosphate + diphosphate. The protein operates within amino-acid biosynthesis; S-adenosyl-L-methionine biosynthesis; S-adenosyl-L-methionine from L-methionine: step 1/1. Functionally, catalyzes the formation of S-adenosylmethionine (AdoMet) from methionine and ATP. The overall synthetic reaction is composed of two sequential steps, AdoMet formation and the subsequent tripolyphosphate hydrolysis which occurs prior to release of AdoMet from the enzyme. The protein is S-adenosylmethionine synthase of Legionella pneumophila subsp. pneumophila (strain Philadelphia 1 / ATCC 33152 / DSM 7513).